The chain runs to 203 residues: ATP-dependent Clp protease proteolytic subunit 2 (203 aa).

Residue serine 97 is the Nucleophile of the active site. The active site involves histidine 122.

This sequence belongs to the peptidase S14 family. In terms of assembly, fourteen ClpP subunits assemble into 2 heptameric rings which stack back to back to give a disk-like structure with a central cavity, resembling the structure of eukaryotic proteasomes.

Its subcellular location is the cytoplasm. It catalyses the reaction Hydrolysis of proteins to small peptides in the presence of ATP and magnesium. alpha-casein is the usual test substrate. In the absence of ATP, only oligopeptides shorter than five residues are hydrolyzed (such as succinyl-Leu-Tyr-|-NHMec, and Leu-Tyr-Leu-|-Tyr-Trp, in which cleavage of the -Tyr-|-Leu- and -Tyr-|-Trp bonds also occurs).. Its function is as follows. Cleaves peptides in various proteins in a process that requires ATP hydrolysis. Has a chymotrypsin-like activity. Plays a major role in the degradation of misfolded proteins. This Myxococcus xanthus (strain DK1622) protein is ATP-dependent Clp protease proteolytic subunit 2.